The following is a 349-amino-acid chain: GDSL esterase/lipase At1g58725 (349 aa).

The first 19 residues, 1–19, serve as a signal peptide directing secretion; sequence MKIQILLFALVLIFVEANA. A glycan (N-linked (GlcNAc...) asparagine) is linked at Asn25. Ser37 (nucleophile) is an active-site residue. An N-linked (GlcNAc...) asparagine glycan is attached at Asn316. Catalysis depends on residues Asp324 and His327.

This sequence belongs to the 'GDSL' lipolytic enzyme family.

The protein localises to the secreted. This chain is GDSL esterase/lipase At1g58725, found in Arabidopsis thaliana (Mouse-ear cress).